The sequence spans 751 residues: Catalase-peroxidase (751 aa).

Residues 1 to 21 (MSNESKCPFHQTAGGGTTNRD) form a disordered region. A cross-link (tryptophyl-tyrosyl-methioninium (Trp-Tyr) (with M-270)) is located at residues 90 to 244 (WHSAGTYRIG…LAAVQMGLIY (155 aa)). His-91 serves as the catalytic Proton acceptor. Residues 244 to 270 (YVNPEGPEGNPDPVASGKDIRETFGRM) constitute a cross-link (tryptophyl-tyrosyl-methioninium (Tyr-Met) (with W-90)). His-285 lines the heme b pocket. The tract at residues 365–390 (AHQWRPKEGKGAGTVPDAHDPGKKHA) is disordered.

This sequence belongs to the peroxidase family. Peroxidase/catalase subfamily. As to quaternary structure, homodimer or homotetramer. Heme b is required as a cofactor. Post-translationally, formation of the three residue Trp-Tyr-Met cross-link is important for the catalase, but not the peroxidase activity of the enzyme.

It catalyses the reaction H2O2 + AH2 = A + 2 H2O. It carries out the reaction 2 H2O2 = O2 + 2 H2O. In terms of biological role, bifunctional enzyme with both catalase and broad-spectrum peroxidase activity. The chain is Catalase-peroxidase from Pseudomonas putida (strain GB-1).